The following is a 404-amino-acid chain: uncharacterized protein (404 aa).

4 residues coordinate [4Fe-4S] cluster: Cys69, Cys75, Cys78, and Cys166. S-adenosyl-L-methionine is bound by residues Gln226, Tyr253, Glu274, and Asp334. The Nucleophile role is filled by Cys361.

This sequence belongs to the class I-like SAM-binding methyltransferase superfamily. RNA M5U methyltransferase family.

This is an uncharacterized protein from Treponema denticola (strain ATCC 35405 / DSM 14222 / CIP 103919 / JCM 8153 / KCTC 15104).